A 603-amino-acid polypeptide reads, in one-letter code: uncharacterized protein (603 aa).

The PE domain occupies 1–93 (MSFVIAAPET…AGAYASAEAA (93 aa)). The disordered stretch occupies residues 309–333 (GIFTGNGGTGGTGGTGTGNQLVGGE).

This sequence belongs to the mycobacterial PE family. PGRS subfamily.

This is an uncharacterized protein from Mycobacterium tuberculosis (strain CDC 1551 / Oshkosh).